We begin with the raw amino-acid sequence, 161 residues long: Ribonuclease P protein component (161 aa).

It belongs to the RnpA family. As to quaternary structure, consists of a catalytic RNA component (M1 or rnpB) and a protein subunit.

The enzyme catalyses Endonucleolytic cleavage of RNA, removing 5'-extranucleotides from tRNA precursor.. In terms of biological role, RNaseP catalyzes the removal of the 5'-leader sequence from pre-tRNA to produce the mature 5'-terminus. It can also cleave other RNA substrates such as 4.5S RNA. The protein component plays an auxiliary but essential role in vivo by binding to the 5'-leader sequence and broadening the substrate specificity of the ribozyme. The polypeptide is Ribonuclease P protein component (Helicobacter pylori (strain J99 / ATCC 700824) (Campylobacter pylori J99)).